The sequence spans 232 residues: 5'-methylthioadenosine/S-adenosylhomocysteine nucleosidase (232 aa).

Glu-12 serves as the catalytic Proton acceptor. Residues Gly-78, Ile-152, and 173-174 (ME) contribute to the substrate site. Asp-197 serves as the catalytic Proton donor.

Belongs to the PNP/UDP phosphorylase family. MtnN subfamily. Homodimer.

The enzyme catalyses S-adenosyl-L-homocysteine + H2O = S-(5-deoxy-D-ribos-5-yl)-L-homocysteine + adenine. It carries out the reaction S-methyl-5'-thioadenosine + H2O = 5-(methylsulfanyl)-D-ribose + adenine. The catalysed reaction is 5'-deoxyadenosine + H2O = 5-deoxy-D-ribose + adenine. Its pathway is amino-acid biosynthesis; L-methionine biosynthesis via salvage pathway; S-methyl-5-thio-alpha-D-ribose 1-phosphate from S-methyl-5'-thioadenosine (hydrolase route): step 1/2. Functionally, catalyzes the irreversible cleavage of the glycosidic bond in both 5'-methylthioadenosine (MTA) and S-adenosylhomocysteine (SAH/AdoHcy) to adenine and the corresponding thioribose, 5'-methylthioribose and S-ribosylhomocysteine, respectively. Also cleaves 5'-deoxyadenosine, a toxic by-product of radical S-adenosylmethionine (SAM) enzymes, into 5-deoxyribose and adenine. Thus, is required for in vivo function of the radical SAM enzymes biotin synthase and lipoic acid synthase, that are inhibited by 5'-deoxyadenosine accumulation. The chain is 5'-methylthioadenosine/S-adenosylhomocysteine nucleosidase from Citrobacter koseri (strain ATCC BAA-895 / CDC 4225-83 / SGSC4696).